The primary structure comprises 288 residues: Nucleotide-binding protein AHA_3920 (288 aa).

Gly8 to Thr15 is a binding site for ATP. Asp56 to Asn59 serves as a coordination point for GTP.

Belongs to the RapZ-like family.

Displays ATPase and GTPase activities. This chain is Nucleotide-binding protein AHA_3920, found in Aeromonas hydrophila subsp. hydrophila (strain ATCC 7966 / DSM 30187 / BCRC 13018 / CCUG 14551 / JCM 1027 / KCTC 2358 / NCIMB 9240 / NCTC 8049).